The primary structure comprises 157 residues: Heavy metal-associated isoprenylated plant protein 16 (157 aa).

In terms of domain architecture, HMA spans 2–71 (KQKILIRIAM…KVAFAELVSV (70 aa)). The tract at residues 73-115 (KVEPPKDGDKKPEEEKKPEEKKPEEKKPEEKKPEPCCQPWQKP) is disordered. Residues 75 to 106 (EPPKDGDKKPEEEKKPEEKKPEEKKPEEKKPE) show a composition bias toward basic and acidic residues. Cys154 carries the post-translational modification Cysteine methyl ester. A lipid anchor (S-farnesyl cysteine) is attached at Cys154. A propeptide spans 155–157 (RIM) (removed in mature form).

Belongs to the HIPP family.

In terms of biological role, probable heavy-metal-binding protein. This Arabidopsis thaliana (Mouse-ear cress) protein is Heavy metal-associated isoprenylated plant protein 16.